A 211-amino-acid polypeptide reads, in one-letter code: Formate dehydrogenase, cytochrome b556(fdo) subunit (211 aa).

The Cytoplasmic portion of the chain corresponds to 1-17; it reads MKRRDTIVRYTAPERIN. Histidine 18 serves as a coordination point for heme b. The helical transmembrane segment at 18–32 threads the bilayer; the sequence is HWITAFCFILAAVSG. Residues 33–53 lie on the Periplasmic side of the membrane; that stretch reads LGFLFPSFNWLMQIMGTPQLA. Residues 54-72 form a helical membrane-spanning segment; sequence RILHPFVGVVMFASFIIMF. Residue histidine 57 participates in heme b binding. At 73-112 the chain is on the cytoplasmic side; the sequence is FRYWHHNLINRDDIFWAKNIRKIVVNEEVGDTGRYNFGQK. The helical transmembrane segment at 113–130 threads the bilayer; sequence CVFWAAIIFLVLLLVSGV. The Periplasmic portion of the chain corresponds to 131 to 151; it reads IIWRPYFAPAFSIPVIRFALM. A helical transmembrane segment spans residues 152–170; that stretch reads LHSFAAVALIVVIMVHIYA. The heme b site is built by histidine 153 and histidine 167. The Cytoplasmic segment spans residues 171–211; it reads ALWVKGTITAMVEGWVTSAWAKKHHPRWYREVRKTTEKKAE.

It belongs to the formate dehydrogenase gamma subunit family. As to quaternary structure, formate dehydrogenase is a membrane-bound complex, formed by subunits alpha, beta and gamma. Requires heme as cofactor.

The protein localises to the cell inner membrane. Its function is as follows. Allows to use formate as major electron donor during aerobic respiration. Subunit gamma is probably the cytochrome b556(FDO) component of the formate dehydrogenase. The protein is Formate dehydrogenase, cytochrome b556(fdo) subunit (fdoI) of Escherichia coli O157:H7.